The primary structure comprises 378 residues: Phosphatidyl-myo-inositol mannosyltransferase (378 aa).

GDP-alpha-D-mannose contacts are provided by Tyr-9 and Gly-16. A 1,2-diacyl-sn-glycero-3-phospho-(1D-myo-inositol) is bound by residues Gln-18, 62–63, and Arg-68; that span reads YN. Residues Arg-196, 201-202, 251-253, Lys-256, 274-278, and Glu-282 contribute to the GDP-alpha-D-mannose site; these read RK, VDD, and ESFGI.

Belongs to the glycosyltransferase group 1 family. As to quaternary structure, monomer. Mg(2+) serves as cofactor.

It localises to the cell membrane. It catalyses the reaction a 1,2-diacyl-sn-glycero-3-phospho-(1D-myo-inositol) + GDP-alpha-D-mannose = a 1,2-diacyl-sn-glycero-3-phospho-[alpha-D-mannopyranosyl-(1&lt;-&gt;6)-D-myo-inositol] + GDP + H(+). The protein operates within phospholipid metabolism; phosphatidylinositol metabolism. Its function is as follows. Involved in the biosynthesis of phosphatidyl-myo-inositol mannosides (PIM) which are early precursors in the biosynthesis of lipomannans (LM) and lipoarabinomannans (LAM). Catalyzes the addition of a mannosyl residue from GDP-D-mannose (GDP-Man) to the position 2 of the carrier lipid phosphatidyl-myo-inositol (PI) to generate a phosphatidyl-myo-inositol bearing an alpha-1,2-linked mannose residue (PIM1). The chain is Phosphatidyl-myo-inositol mannosyltransferase from Mycobacterium bovis (strain ATCC BAA-935 / AF2122/97).